The sequence spans 451 residues: Phosphoglucosamine mutase (451 aa).

S107 (phosphoserine intermediate) is an active-site residue. Positions 107, 246, 248, and 250 each coordinate Mg(2+). S107 bears the Phosphoserine mark.

Belongs to the phosphohexose mutase family. Requires Mg(2+) as cofactor. Post-translationally, activated by phosphorylation.

The catalysed reaction is alpha-D-glucosamine 1-phosphate = D-glucosamine 6-phosphate. Catalyzes the conversion of glucosamine-6-phosphate to glucosamine-1-phosphate. The chain is Phosphoglucosamine mutase from Azoarcus sp. (strain BH72).